The following is a 205-amino-acid chain: Large ribosomal subunit protein uL4 (205 aa).

A disordered region spans residues Gly54–Arg78. Over residues Lys62–Arg71 the composition is skewed to basic residues.

This sequence belongs to the universal ribosomal protein uL4 family. As to quaternary structure, part of the 50S ribosomal subunit.

Functionally, one of the primary rRNA binding proteins, this protein initially binds near the 5'-end of the 23S rRNA. It is important during the early stages of 50S assembly. It makes multiple contacts with different domains of the 23S rRNA in the assembled 50S subunit and ribosome. In terms of biological role, forms part of the polypeptide exit tunnel. In Ehrlichia chaffeensis (strain ATCC CRL-10679 / Arkansas), this protein is Large ribosomal subunit protein uL4.